A 169-amino-acid polypeptide reads, in one-letter code: Peptide deformylase (169 aa).

The Fe cation site is built by C91 and H133. E134 is an active-site residue. H137 provides a ligand contact to Fe cation.

This sequence belongs to the polypeptide deformylase family. It depends on Fe(2+) as a cofactor.

The catalysed reaction is N-terminal N-formyl-L-methionyl-[peptide] + H2O = N-terminal L-methionyl-[peptide] + formate. Its function is as follows. Removes the formyl group from the N-terminal Met of newly synthesized proteins. Requires at least a dipeptide for an efficient rate of reaction. N-terminal L-methionine is a prerequisite for activity but the enzyme has broad specificity at other positions. This Klebsiella pneumoniae subsp. pneumoniae (strain ATCC 700721 / MGH 78578) protein is Peptide deformylase.